Here is a 447-residue protein sequence, read N- to C-terminus: ATP-dependent protease ATPase subunit HslU (447 aa).

ATP contacts are provided by residues Ile18, 60–65, Asp259, Glu325, and Arg397; that span reads GVGKTE.

The protein belongs to the ClpX chaperone family. HslU subfamily. A double ring-shaped homohexamer of HslV is capped on each side by a ring-shaped HslU homohexamer. The assembly of the HslU/HslV complex is dependent on binding of ATP.

Its subcellular location is the cytoplasm. ATPase subunit of a proteasome-like degradation complex; this subunit has chaperone activity. The binding of ATP and its subsequent hydrolysis by HslU are essential for unfolding of protein substrates subsequently hydrolyzed by HslV. HslU recognizes the N-terminal part of its protein substrates and unfolds these before they are guided to HslV for hydrolysis. This is ATP-dependent protease ATPase subunit HslU from Burkholderia cenocepacia (strain HI2424).